The chain runs to 636 residues: Probable potassium transport system protein Kup (636 aa).

The next 12 membrane-spanning stretches (helical) occupy residues 23–43, 63–83, 114–134, 150–170, 182–202, 217–237, 260–280, 298–318, 350–370, 379–399, 407–427, and 432–452; these read LVIG…LYSL, IISL…VVFV, VLMM…VITP, PQLS…LFLI, FGPV…YNLV, ISFL…VFLV, WFVL…AMLL, LLIP…QAVI, IYLP…VISF, AYGI…AVVM, PALV…FFAA, and VAEG…LLMT.

Belongs to the HAK/KUP transporter (TC 2.A.72) family.

The protein resides in the cell inner membrane. It catalyses the reaction K(+)(in) + H(+)(in) = K(+)(out) + H(+)(out). In terms of biological role, transport of potassium into the cell. Likely operates as a K(+):H(+) symporter. The sequence is that of Probable potassium transport system protein Kup from Cupriavidus pinatubonensis (strain JMP 134 / LMG 1197) (Cupriavidus necator (strain JMP 134)).